The chain runs to 79 residues: Dolichyl-diphosphooligosaccharide--protein glycosyltransferase subunit TMEM258 (79 aa).

2 helical membrane-spanning segments follow: residues 17–37 (VFPH…AWFF) and 55–75 (LISL…LLWV).

It belongs to the OST5 family. Component of the oligosaccharyltransferase (OST) complex.

The protein localises to the membrane. The protein resides in the endoplasmic reticulum. Its subcellular location is the cytoplasm. The protein operates within protein modification; protein glycosylation. Subunit of the oligosaccharyl transferase (OST) complex that catalyzes the initial transfer of a defined glycan (Glc(3)Man(9)GlcNAc(2) in eukaryotes) from the lipid carrier dolichol-pyrophosphate to an asparagine residue within an Asn-X-Ser/Thr consensus motif in nascent polypeptide chains, the first step in protein N-glycosylation. N-glycosylation occurs cotranslationally and the complex associates with the Sec61 complex at the channel-forming translocon complex that mediates protein translocation across the endoplasmic reticulum (ER). All subunits are required for a maximal enzyme activity. The protein is Dolichyl-diphosphooligosaccharide--protein glycosyltransferase subunit TMEM258 of Gallus gallus (Chicken).